The following is a 67-amino-acid chain: uncharacterized protein (67 aa).

This is an uncharacterized protein from Thermoproteus tenax virus 1 (strain KRA1) (TTV1).